A 373-amino-acid chain; its full sequence is NAD(P)H-quinone oxidoreductase subunit 1 (373 aa).

8 consecutive transmembrane segments (helical) span residues 28 to 48 (LLWLPLPMLLVLVAAVVGVLV), 98 to 118 (LLFTLGPVLVVVPVIISWLII), 129 to 149 (VGVGIFLWISFSSIQPIGLLM), 177 to 197 (LALAVLAIVMMTNSLSTVDIV), 205 to 225 (ILSWNIWRQPVGFLIFWICAL), 267 to 287 (VLSAVLVSVLYLGGWGFPIPV), 309 to 329 (TVGIVMTVLKAYLLVFVAILL), and 348 to 368 (FLLPLSLVNLLVTAALKLAFP).

This sequence belongs to the complex I subunit 1 family. NDH-1 is composed of at least 11 different subunits.

Its subcellular location is the cellular thylakoid membrane. It carries out the reaction a plastoquinone + NADH + (n+1) H(+)(in) = a plastoquinol + NAD(+) + n H(+)(out). The enzyme catalyses a plastoquinone + NADPH + (n+1) H(+)(in) = a plastoquinol + NADP(+) + n H(+)(out). Functionally, NDH-1 shuttles electrons from an unknown electron donor, via FMN and iron-sulfur (Fe-S) centers, to quinones in the respiratory and/or the photosynthetic chain. The immediate electron acceptor for the enzyme in this species is believed to be plastoquinone. Couples the redox reaction to proton translocation, and thus conserves the redox energy in a proton gradient. The protein is NAD(P)H-quinone oxidoreductase subunit 1 of Synechococcus sp. (strain CC9605).